The chain runs to 504 residues: WD repeat-containing protein 55 homolog (504 aa).

2 disordered regions span residues 1 to 21 (MDRH…DIDD) and 33 to 132 (QEVL…DDDD). Acidic residues-rich tracts occupy residues 12-21 (NEDELDDIDD) and 33-48 (QEVL…EYDL). The segment covering 63–74 (SSSNESISSDGS) has biased composition (low complexity). Acidic residues predominate over residues 78–89 (NAEDSDSDDSMI). 6 WD repeats span residues 156-195 (KLED…NKLL), 200-239 (VHAK…LKKL), 243-281 (AHDD…AIFE), 284-323 (EVED…LYVQ), 326-365 (PYEE…YHCD), and 410-449 (QHNM…DFGD). Positions 477 to 504 (FFADMTKDQDDDDNDGGNDTAAGPSNVT) are disordered.

This sequence belongs to the WD repeat WDR55 family.

This chain is WD repeat-containing protein 55 homolog, found in Drosophila virilis (Fruit fly).